Consider the following 479-residue polypeptide: Glycogen synthase (479 aa).

Lys-16 contacts ADP-alpha-D-glucose.

This sequence belongs to the glycosyltransferase 1 family. Bacterial/plant glycogen synthase subfamily.

It carries out the reaction [(1-&gt;4)-alpha-D-glucosyl](n) + ADP-alpha-D-glucose = [(1-&gt;4)-alpha-D-glucosyl](n+1) + ADP + H(+). It participates in glycan biosynthesis; glycogen biosynthesis. Functionally, synthesizes alpha-1,4-glucan chains using ADP-glucose. The sequence is that of Glycogen synthase from Lactiplantibacillus plantarum (strain ATCC BAA-793 / NCIMB 8826 / WCFS1) (Lactobacillus plantarum).